Here is a 462-residue protein sequence, read N- to C-terminus: Argininosuccinate lyase (462 aa).

It belongs to the lyase 1 family. Argininosuccinate lyase subfamily.

The protein localises to the cytoplasm. It carries out the reaction 2-(N(omega)-L-arginino)succinate = fumarate + L-arginine. It participates in amino-acid biosynthesis; L-arginine biosynthesis; L-arginine from L-ornithine and carbamoyl phosphate: step 3/3. The polypeptide is Argininosuccinate lyase (Bacillus cytotoxicus (strain DSM 22905 / CIP 110041 / 391-98 / NVH 391-98)).